A 1157-amino-acid polypeptide reads, in one-letter code: Hephaestin (1157 aa).

An N-terminal signal peptide occupies residues 1 to 18 (MKAGHLLWALLLMHSLWS). The Extracellular segment spans residues 19-1109 (IPTDGAIRNY…PIKDVEILSS (1091 aa)). Plastocyanin-like domains lie at 24–206 (AIRN…LITC), 218–366 (QRKD…VDSC), 370–559 (PPVD…LLVC), 569–717 (KQKG…VSQC), 730–902 (ASRV…LVIC), and 910–1066 (NGGR…SHEE). N-linked (GlcNAc...) asparagine glycans are attached at residues Asn49 and Asn54. The Na(+) site is built by Gly70 and Tyr73. Cu(2+) is bound by residues His126 and His128. His126 serves as a coordination point for O2. Ca(2+) contacts are provided by Lys134, Asp152, and Asp153. Asn164 is a glycosylation site (N-linked (GlcNAc...) asparagine). An intrachain disulfide couples Cys180 to Cys206. Cu(2+)-binding residues include His186 and His188. His186 serves as a coordination point for O2. Asn236 carries an N-linked (GlcNAc...) asparagine glycan. Ser265 contacts Na(+). A disulfide bridge connects residues Cys285 and Cys366. Positions 304, 347, and 352 each coordinate Cu(2+). The Na(+) site is built by Tyr416, Gly425, and Tyr428. Cys533 and Cys559 are joined by a disulfide. The N-linked (GlcNAc...) asparagine glycan is linked to Asn587. Ser616 contributes to the Na(+) binding site. An intrachain disulfide couples Cys636 to Cys717. The Cu(2+) site is built by His655, Cys698, His703, and Met708. 2 N-linked (GlcNAc...) asparagine glycosylation sites follow: Asn713 and Asn757. Na(+) contacts are provided by Phe768 and Gly777. Residues Cys876 and Cys902 are joined by a disulfide bond. Residue Asn930 is glycosylated (N-linked (GlcNAc...) asparagine). Cu(2+)-binding residues include His999, His1002, His1004, His1044, Cys1045, His1046, His1050, and Met1055. His1002 and His1004 together coordinate O2. Residue His1046 coordinates O2. The chain crosses the membrane as a helical span at residues 1110–1130 (ALIAICVLLLLIALALGGVVW). Over 1131 to 1157 (YQHRQRKLRRNRRSILDDSFKLLSLKQ) the chain is Cytoplasmic. A phosphoserine mark is found at Ser1144, Ser1149, and Ser1154.

This sequence belongs to the multicopper oxidase family. As to quaternary structure, part of a complex composed of SLC40A1/ferroportin, TF/transferrin and HEPH/hephaestin that transfers iron from cells to transferrin. It depends on Cu cation as a cofactor.

The protein resides in the basolateral cell membrane. It carries out the reaction 4 Fe(2+) + O2 + 4 H(+) = 4 Fe(3+) + 2 H2O. In terms of biological role, plasma membrane ferroxidase that mediates the extracellular conversion of ferrous/Fe(2+) iron into its ferric/Fe(3+) form. Couples ferroportin which specifically exports ferrous/Fe(2+) iron from cells to transferrin that only binds and shuttles extracellular ferric/Fe(3+) iron throughout the body. By helping iron transfer from cells to blood mainly contributes to dietary iron absorption by the intestinal epithelium and more generally regulates iron levels in the body. This is Hephaestin from Mus musculus (Mouse).